A 355-amino-acid chain; its full sequence is MLCLGIETSCDETAVALVENGKCIGSILGTQAPLHALFGGVVPELASREHYRCLGPLYDKLMEDAKVTLADLDVIAVTRGPGLLGALLVGLAFAKGLALASGKTLIGINHLHAHLLVAAIEEPIEYPALGLLVSGGHTHIYKIDAPDIFILLARTLDDAAGEACDKFAKMLGLPYPGGVIIDKLAQQGIPDPYLFPRPYIHNSELDFSFSGLKTSAAMYLKQYPQLIEEGQRYCSNNSKVAIKEELYNVCSSYLLAISETLYIKMERALQKYTNEIKTIIVAGGLAANSFVRQAMHNLAINYNKKILLPEQKLCTDNAVMIAYYGELLAEKGYCHRLDLSAIPRGQHIPDDMVKV.

The Fe cation site is built by histidine 110 and histidine 114. Substrate contacts are provided by residues 132–136, aspartate 165, glycine 178, aspartate 182, and asparagine 288; that span reads LVSGG. Aspartate 316 lines the Fe cation pocket.

The protein belongs to the KAE1 / TsaD family. Requires Fe(2+) as cofactor.

It localises to the cytoplasm. It catalyses the reaction L-threonylcarbamoyladenylate + adenosine(37) in tRNA = N(6)-L-threonylcarbamoyladenosine(37) in tRNA + AMP + H(+). Required for the formation of a threonylcarbamoyl group on adenosine at position 37 (t(6)A37) in tRNAs that read codons beginning with adenine. Is involved in the transfer of the threonylcarbamoyl moiety of threonylcarbamoyl-AMP (TC-AMP) to the N6 group of A37, together with TsaE and TsaB. TsaD likely plays a direct catalytic role in this reaction. This is tRNA N6-adenosine threonylcarbamoyltransferase from Lawsonia intracellularis (strain PHE/MN1-00).